The following is a 410-amino-acid chain: Enterobactin exporter EntS (410 aa).

At 1-21 (MNKQSWLLNLSLLKTHPAFRA) the chain is on the cytoplasmic side. A helical transmembrane segment spans residues 22–42 (VFLARFISIVSLGLLGVAVPV). Residues 43-55 (QIQMMTHSTWQVG) are Periplasmic-facing. The helical transmembrane segment at 56 to 76 (LSVTLTGGAMFVGLMVGGVLA) threads the bilayer. Residues 77–83 (DRYERKK) are Cytoplasmic-facing. Residues 84–104 (VILLARGTCGIGFIGLCLNAL) form a helical membrane-spanning segment. Residues 105-109 (LPEPS) are Periplasmic-facing. The helical transmembrane segment at 110 to 130 (LLAIYLLGLWDGFFASLGVTA) threads the bilayer. Over 131–156 (LLAATSALVGRENLMQAGAITMLTVR) the chain is Cytoplasmic. Residues 157–177 (LGSVISPMIGGLLLATGGVAW) form a helical membrane-spanning segment. Asn-178 is a topological domain (periplasmic). The chain crosses the membrane as a helical span at residues 179 to 199 (YGLAAAGTFITLLPLLSLPEL). The Cytoplasmic segment spans residues 200–218 (PPPPQPLEHPLKSLLAGFR). The chain crosses the membrane as a helical span at residues 219-233 (FLLASPLLGGLLTMA). At 234 to 250 (SAVLVLYPALADNWQMS) the chain is on the periplasmic side. The helical transmembrane segment at 251–271 (AAQIGFLYAAIPLGAAIGALT) threads the bilayer. Residues 272–281 (SGKLAHSARP) lie on the Cytoplasmic side of the membrane. Residues 282–301 (GLLMLLSTLGSFLAIGLFGL) traverse the membrane as a helical segment. Residues 302–307 (MPMWIL) are Periplasmic-facing. Residues 308–330 (GVVCLALFGWLSAVSSLLQYTML) traverse the membrane as a helical segment. The Cytoplasmic segment spans residues 331-350 (QTQTPEAMLGRINGLWTAQN). Residues 351–371 (VTGDAIGAALLGGLGAMMTPV) traverse the membrane as a helical segment. A topological domain (periplasmic) is located at residue Ala-372. Residues 373-393 (SASASGFGLLIIGVLLLLVLV) traverse the membrane as a helical segment. The Cytoplasmic segment spans residues 394–410 (ELRRFRQTPPQVTASDS).

It belongs to the major facilitator superfamily. EntS (TC 2.A.1.38) family.

It localises to the cell inner membrane. Functionally, component of an export pathway for enterobactin. This is Enterobactin exporter EntS from Shigella flexneri.